The sequence spans 350 residues: Putative zinc metalloprotease jhp_0242 (350 aa).

Position 16 (histidine 16) interacts with Zn(2+). The active site involves glutamate 17. Histidine 20 contributes to the Zn(2+) binding site. A run of 5 helical transmembrane segments spans residues 43-63, 94-114, 249-269, 277-297, and 326-346; these read WFFK…GGYV, LWIL…VYFF, LIMG…VGAL, MLLL…LLPI, and LWLV…FNDI. Residues 108–177 form the PDZ domain; it reads AVLVYFFLAL…GELILEIERN (70 aa).

It belongs to the peptidase M50B family. It depends on Zn(2+) as a cofactor.

It localises to the cell inner membrane. The chain is Putative zinc metalloprotease jhp_0242 from Helicobacter pylori (strain J99 / ATCC 700824) (Campylobacter pylori J99).